The following is a 156-amino-acid chain: Arginine repressor (156 aa).

The protein belongs to the ArgR family.

It localises to the cytoplasm. The protein operates within amino-acid biosynthesis; L-arginine biosynthesis [regulation]. Functionally, regulates arginine biosynthesis genes. The protein is Arginine repressor of Shewanella loihica (strain ATCC BAA-1088 / PV-4).